A 152-amino-acid chain; its full sequence is Deoxyuridine 5'-triphosphate nucleotidohydrolase (152 aa).

Substrate-binding positions include 71 to 73 (RSG), Asn84, 88 to 90 (LID), and Met98.

This sequence belongs to the dUTPase family. Mg(2+) serves as cofactor.

It catalyses the reaction dUTP + H2O = dUMP + diphosphate + H(+). It participates in pyrimidine metabolism; dUMP biosynthesis; dUMP from dCTP (dUTP route): step 2/2. This enzyme is involved in nucleotide metabolism: it produces dUMP, the immediate precursor of thymidine nucleotides and it decreases the intracellular concentration of dUTP so that uracil cannot be incorporated into DNA. The chain is Deoxyuridine 5'-triphosphate nucleotidohydrolase from Cronobacter sakazakii (strain ATCC BAA-894) (Enterobacter sakazakii).